The chain runs to 141 residues: Large ribosomal subunit protein uL16 (141 aa).

Positions 1 to 20 are disordered; sequence MLMPKRTKYRKQMKGRNRGK.

This sequence belongs to the universal ribosomal protein uL16 family. As to quaternary structure, part of the 50S ribosomal subunit.

Functionally, binds 23S rRNA and is also seen to make contacts with the A and possibly P site tRNAs. This is Large ribosomal subunit protein uL16 from Helicobacter hepaticus (strain ATCC 51449 / 3B1).